Consider the following 338-residue polypeptide: 3-dehydroquinate synthase (338 aa).

Belongs to the archaeal-type DHQ synthase family.

The catalysed reaction is 2-amino-2,3,7-trideoxy-D-lyxo-hept-6-ulosonate + NAD(+) + H2O = 3-dehydroquinate + NH4(+) + NADH + H(+). In terms of biological role, catalyzes the oxidative deamination and cyclization of 2-amino-3,7-dideoxy-D-threo-hept-6-ulosonic acid (ADH) to yield 3-dehydroquinate (DHQ), which is fed into the canonical shikimic pathway of aromatic amino acid biosynthesis. In Cenarchaeum symbiosum (strain A), this protein is 3-dehydroquinate synthase.